We begin with the raw amino-acid sequence, 284 residues long: D-tagatose-1,6-bisphosphate aldolase subunit GatY (284 aa).

The Proton donor role is filled by Asp-82. Zn(2+)-binding residues include His-83 and His-180. Gly-181 is a dihydroxyacetone phosphate binding site. Residue His-208 coordinates Zn(2+). Dihydroxyacetone phosphate is bound by residues 209-211 (GAS) and 230-233 (NVAT).

Belongs to the class II fructose-bisphosphate aldolase family. TagBP aldolase GatY subfamily. Forms a complex with GatZ. It depends on Zn(2+) as a cofactor.

The catalysed reaction is D-tagatofuranose 1,6-bisphosphate = D-glyceraldehyde 3-phosphate + dihydroxyacetone phosphate. The protein operates within carbohydrate metabolism; D-tagatose 6-phosphate degradation; D-glyceraldehyde 3-phosphate and glycerone phosphate from D-tagatose 6-phosphate: step 2/2. Functionally, catalytic subunit of the tagatose-1,6-bisphosphate aldolase GatYZ, which catalyzes the reversible aldol condensation of dihydroxyacetone phosphate (DHAP or glycerone-phosphate) with glyceraldehyde 3-phosphate (G3P) to produce tagatose 1,6-bisphosphate (TBP). Requires GatZ subunit for full activity and stability. Is involved in the catabolism of galactitol and D-tagatose. This chain is D-tagatose-1,6-bisphosphate aldolase subunit GatY (gatY), found in Klebsiella oxytoca.